A 462-amino-acid polypeptide reads, in one-letter code: Argininosuccinate lyase (462 aa).

This sequence belongs to the lyase 1 family. Argininosuccinate lyase subfamily.

Its subcellular location is the cytoplasm. It catalyses the reaction 2-(N(omega)-L-arginino)succinate = fumarate + L-arginine. The protein operates within amino-acid biosynthesis; L-arginine biosynthesis; L-arginine from L-ornithine and carbamoyl phosphate: step 3/3. The protein is Argininosuccinate lyase of Lachnoclostridium phytofermentans (strain ATCC 700394 / DSM 18823 / ISDg) (Clostridium phytofermentans).